Reading from the N-terminus, the 338-residue chain is Ribosomal RNA small subunit methyltransferase H (338 aa).

Residues 53 to 55 (GGH), Asp72, Tyr99, Asp123, and Gln130 contribute to the S-adenosyl-L-methionine site. Positions 277-298 (ITPRSKSKSPEGLPVELPGMGP) are disordered.

This sequence belongs to the methyltransferase superfamily. RsmH family.

It is found in the cytoplasm. The enzyme catalyses cytidine(1402) in 16S rRNA + S-adenosyl-L-methionine = N(4)-methylcytidine(1402) in 16S rRNA + S-adenosyl-L-homocysteine + H(+). Its function is as follows. Specifically methylates the N4 position of cytidine in position 1402 (C1402) of 16S rRNA. In Rhodococcus opacus (strain B4), this protein is Ribosomal RNA small subunit methyltransferase H.